Here is a 558-residue protein sequence, read N- to C-terminus: Urocanate hydratase (558 aa).

NAD(+) is bound by residues 54–55 (GG), Gln-132, 178–180 (GMG), Glu-198, 244–245 (NA), 265–269 (QTSAH), 275–276 (YL), and Tyr-324. Cys-412 is an active-site residue. Gly-494 is an NAD(+) binding site.

It belongs to the urocanase family. It depends on NAD(+) as a cofactor.

It is found in the cytoplasm. The enzyme catalyses 4-imidazolone-5-propanoate = trans-urocanate + H2O. The protein operates within amino-acid degradation; L-histidine degradation into L-glutamate; N-formimidoyl-L-glutamate from L-histidine: step 2/3. Catalyzes the conversion of urocanate to 4-imidazolone-5-propionate. The protein is Urocanate hydratase of Acinetobacter baumannii (strain AB307-0294).